The sequence spans 330 residues: 2-methyl-6-phytyl-1,4-hydroquinone methyltransferase 1, chloroplastic (330 aa).

The N-terminal 45 residues, 1 to 45 (MKEMVSSSTFRAPGGLGFLGPSKIGLIPLRNRSGVRSRVKYIAPK), are a transit peptide targeting the chloroplast. Residues 46-295 (CAVSSARPAS…DVEKPVNPFT (250 aa)) lie on the Chloroplast intermembrane side of the membrane. An SAM motif I region spans residues 107–116 (VVDVGGGTGF). The interval 152–165 (VNIIEGDAEDLPYP) is SAM motif II. Residues 193–206 (RVLKLGGVACLIGP) form an SAM motif III region. The chain crosses the membrane as a helical span at residues 296–316 (FIFRFVMGTICASYYVLVPIY). The Stromal segment spans residues 317–330 (MWMKDQIVPKDQPI).

It belongs to the class I-like SAM-binding methyltransferase superfamily. MPBQ/MBSQ MT family.

The protein resides in the plastid. The protein localises to the chloroplast inner membrane. The catalysed reaction is 2-methyl-6-phytyl-1,4-benzene-1,4-diol + S-adenosyl-L-methionine = 2,3-dimethyl-6-phytylbenzene-1,4-diol + S-adenosyl-L-homocysteine + H(+). It catalyses the reaction 2-methyl-6-(all-trans-nonaprenyl)benzene-1,4-diol + S-adenosyl-L-methionine = plastoquinol-9 + S-adenosyl-L-homocysteine + H(+). It carries out the reaction 6-geranylgeranyl-2-methylbenzene-1,4-diol + S-adenosyl-L-methionine = 6-geranylgeranyl-2,3-dimethylbenzene-1,4-diol + S-adenosyl-L-homocysteine + H(+). Its pathway is cofactor biosynthesis; tocopherol biosynthesis. Its function is as follows. Involved in a key methylation step in both tocopherols (vitamin E) and plastoquinone synthesis. Catalyzes the conversion of 2-methyl-6-phytyl-1,4-hydroquinone (MPBQ) to 2,3-dimethyl-6-phytyl-1,4-hydroquinone (DMPQ, a substrate for tocopherol cyclase), and 2-methyl-6-solanyl-1,4-benzoquinone (MSBQ) to plastoquinone. The chain is 2-methyl-6-phytyl-1,4-hydroquinone methyltransferase 1, chloroplastic (ARSM2) from Oryza sativa subsp. japonica (Rice).